The primary structure comprises 165 residues: MKVAVTGRPGVGKTTLCLKVHESLKDKMTVGGFITKEVRRDGVRVGFKLVDLSSGNEEWLARVGEGKARVGKYAVNVEGLEEFLDSVRTDADLVIIDEVGPMELKSRKFVRFVENLMGRERLLFTIHLKSRHRLLDRIRREFKVYVIDESNRNRIAEEITRILEG.

ATP is bound by residues 7 to 14 and 93 to 100; these read GRPGVGKT and LVIIDEVG.

It belongs to the THEP1 NTPase family.

The enzyme catalyses a ribonucleoside 5'-triphosphate + H2O = a ribonucleoside 5'-diphosphate + phosphate + H(+). Has nucleotide phosphatase activity towards ATP, GTP, CTP, TTP and UTP. May hydrolyze nucleoside diphosphates with lower efficiency. This Archaeoglobus fulgidus (strain ATCC 49558 / DSM 4304 / JCM 9628 / NBRC 100126 / VC-16) protein is Nucleoside-triphosphatase THEP1.